Consider the following 107-residue polypeptide: U1-lycotoxin-Ls1x (107 aa).

The N-terminal stretch at 1–20 (MMKVLVVVALLVTLISYSSS) is a signal peptide. A propeptide spanning residues 21–41 (EGIDDLEADELLSLMANEHPR) is cleaved from the precursor. 4 disulfide bridges follow: Cys44–Cys59, Cys51–Cys68, Cys58–Cys86, and Cys70–Cys84.

This sequence belongs to the neurotoxin 19 (CSTX) family. 04 (U1-Lctx) subfamily. Expressed by the venom gland.

It is found in the secreted. This is U1-lycotoxin-Ls1x from Lycosa singoriensis (Wolf spider).